We begin with the raw amino-acid sequence, 446 residues long: Tubulin beta chain (446 aa).

Glutamine 11, glutamate 69, serine 138, glycine 142, threonine 143, glycine 144, asparagine 204, and asparagine 226 together coordinate GTP. Glutamate 69 serves as a coordination point for Mg(2+). Residues 421–446 (EYQQYQDAGIDEEEEEYEEELPEGEE) are disordered. A compositionally biased stretch (acidic residues) spans 429-446 (GIDEEEEEYEEELPEGEE).

This sequence belongs to the tubulin family. Dimer of alpha and beta chains. A typical microtubule is a hollow water-filled tube with an outer diameter of 25 nm and an inner diameter of 15 nM. Alpha-beta heterodimers associate head-to-tail to form protofilaments running lengthwise along the microtubule wall with the beta-tubulin subunit facing the microtubule plus end conferring a structural polarity. Microtubules usually have 13 protofilaments but different protofilament numbers can be found in some organisms and specialized cells. The cofactor is Mg(2+).

The protein localises to the cytoplasm. The protein resides in the cytoskeleton. Tubulin is the major constituent of microtubules, a cylinder consisting of laterally associated linear protofilaments composed of alpha- and beta-tubulin heterodimers. Microtubules grow by the addition of GTP-tubulin dimers to the microtubule end, where a stabilizing cap forms. Below the cap, tubulin dimers are in GDP-bound state, owing to GTPase activity of alpha-tubulin. This Fusarium fujikuroi (Bakanae and foot rot disease fungus) protein is Tubulin beta chain (TUB2).